We begin with the raw amino-acid sequence, 440 residues long: Transposon Ty1-NL1 Gag polyprotein (440 aa).

Polar residues-rich tracts occupy residues 1–23 (MESQ…SVTS), 48–60 (TKAN…TPAS), 71–86 (SPQT…GPYQ), and 131–152 (PQYP…GNTF). Disordered stretches follow at residues 1–86 (MESQ…GPYQ), 131–171 (PQYP…YVRP), and 350–425 (QQES…TEPI). Residues 153 to 165 (TDSSSADSDMTST) show a composition bias toward low complexity. The RNA-binding stretch occupies residues 299–401 (NNGIPINNKV…NSQSRTARAH (103 aa)). Residues 363 to 372 (NPSDEKKDSR) show a composition bias toward basic and acidic residues. Polar residues predominate over residues 373–412 (TYTNTTKPKSITRNSQKPNNSQSRTARAHNVSTSNNSSGP).

Homotrimer.

Its subcellular location is the cytoplasm. Functionally, capsid protein (CA) is the structural component of the virus-like particle (VLP), forming the shell that encapsulates the retrotransposons dimeric RNA genome. The particles are assembled from trimer-clustered units and there are holes in the capsid shells that allow for the diffusion of macromolecules. CA also has nucleocapsid-like chaperone activity, promoting primer tRNA(i)-Met annealing to the multipartite primer-binding site (PBS), dimerization of Ty1 RNA and initiation of reverse transcription. This chain is Transposon Ty1-NL1 Gag polyprotein (TY1A-NL1), found in Saccharomyces cerevisiae (strain ATCC 204508 / S288c) (Baker's yeast).